We begin with the raw amino-acid sequence, 351 residues long: Phosphate acyltransferase (351 aa).

Belongs to the PlsX family. Homodimer. Probably interacts with PlsY.

It localises to the cytoplasm. It catalyses the reaction a fatty acyl-[ACP] + phosphate = an acyl phosphate + holo-[ACP]. Its pathway is lipid metabolism; phospholipid metabolism. Functionally, catalyzes the reversible formation of acyl-phosphate (acyl-PO(4)) from acyl-[acyl-carrier-protein] (acyl-ACP). This enzyme utilizes acyl-ACP as fatty acyl donor, but not acyl-CoA. This is Phosphate acyltransferase from Neisseria meningitidis serogroup B (strain ATCC BAA-335 / MC58).